We begin with the raw amino-acid sequence, 258 residues long: C1q-related factor (258 aa).

Residues 1 to 16 (MLLVLVVLIPVLVSSG) form the signal peptide. A disordered region spans residues 39-117 (GPGAGARTDG…PGLPGAGGSG (79 aa)). The segment covering 67 to 77 (GPQGKPGRTGK) has biased composition (low complexity). In terms of domain architecture, Collagen-like spans 67–115 (GPQGKPGRTGKPGPPGPPGDPGPPGPVGPPGEKGEPGKPGPPGLPGAGG). A compositionally biased stretch (pro residues) spans 78–95 (PGPPGPPGDPGPPGPVGP). One can recognise a C1q domain in the interval 125 to 258 (TTVPRVAFYA…TFSGFIIYSD (134 aa)).

As to quaternary structure, interacts with ADGRB3. Forms heterooligomers with C1QL4, when proteins are coexpressed; this interaction does not occur after secretion. As to expression, expressed in brainstem.

The protein localises to the secreted. In terms of biological role, may regulate the number of excitatory synapses that are formed on hippocampus neurons. Has no effect on inhibitory synapses. In Homo sapiens (Human), this protein is C1q-related factor (C1QL1).